The primary structure comprises 251 residues: 5'-nucleotidase SurE 1 (251 aa).

The a divalent metal cation site is built by Asp8, Asp9, Ser39, and Asn95.

Belongs to the SurE nucleotidase family. It depends on a divalent metal cation as a cofactor.

The protein resides in the cytoplasm. It carries out the reaction a ribonucleoside 5'-phosphate + H2O = a ribonucleoside + phosphate. In terms of biological role, nucleotidase that shows phosphatase activity on nucleoside 5'-monophosphates. The sequence is that of 5'-nucleotidase SurE 1 from Thermus thermophilus (strain ATCC BAA-163 / DSM 7039 / HB27).